The following is a 420-amino-acid chain: Calreticulin (420 aa).

A signal peptide spans 1–18 (MKWGVVAVLATLVVAASA). A disulfide bridge links cysteine 106 with cysteine 140. Residues tyrosine 110, lysine 112, tyrosine 131, and aspartate 138 each contribute to the an alpha-D-glucoside site. 7 tandem repeats follow at residues 194 to 205 (VASGSLYEDWDM), 213 to 224 (DPKASKPEDWDE), 230 to 241 (DPEDKKPEGWDD), 248 to 259 (DKDAKKPEDWDD), 263 to 273 (GTWEPPMIPNP), 277 to 287 (GEWKAKMIKNP), and 291 to 301 (GIWVAPDIDNP). Residues 194–259 (VASGSLYEDW…DAKKPEDWDD (66 aa)) form a 4 X approximate repeats region. Residues 210 to 220 (TIKDPKASKPE) show a composition bias toward basic and acidic residues. The disordered stretch occupies residues 210–272 (TIKDPKASKP…GTWEPPMIPN (63 aa)). Positions 221–230 (DWDEREEIAD) are enriched in acidic residues. Residues 263 to 301 (GTWEPPMIPNPEYKGEWKAKMIKNPAYKGIWVAPDIDNP) form a 3 X approximate repeats region. Glutamate 321 contributes to the an alpha-D-glucoside binding site. Basic and acidic residues predominate over residues 357–376 (EEKAMFDKVKKEEDEKKAKD). Residues 357-420 (EEKAMFDKVK…EEEESGHDEL (64 aa)) form a disordered region. 2 stretches are compositionally biased toward acidic residues: residues 385–398 (EAAEEEDDEYEDKE) and 411–420 (EEEESGHDEL). Residues 417-420 (HDEL) carry the Prevents secretion from ER motif.

The protein belongs to the calreticulin family.

The protein localises to the endoplasmic reticulum lumen. Molecular calcium-binding chaperone promoting folding, oligomeric assembly and quality control in the ER via the calreticulin/calnexin cycle. This lectin may interact transiently with almost all of the monoglucosylated glycoproteins that are synthesized in the ER. The chain is Calreticulin from Chlamydomonas reinhardtii (Chlamydomonas smithii).